We begin with the raw amino-acid sequence, 473 residues long: ATP synthase subunit beta (473 aa).

Residue 158–165 participates in ATP binding; sequence GGAGVGKT.

It belongs to the ATPase alpha/beta chains family. F-type ATPases have 2 components, CF(1) - the catalytic core - and CF(0) - the membrane proton channel. CF(1) has five subunits: alpha(3), beta(3), gamma(1), delta(1), epsilon(1). CF(0) has three main subunits: a(1), b(2) and c(9-12). The alpha and beta chains form an alternating ring which encloses part of the gamma chain. CF(1) is attached to CF(0) by a central stalk formed by the gamma and epsilon chains, while a peripheral stalk is formed by the delta and b chains.

It localises to the cell membrane. The catalysed reaction is ATP + H2O + 4 H(+)(in) = ADP + phosphate + 5 H(+)(out). Produces ATP from ADP in the presence of a proton gradient across the membrane. The catalytic sites are hosted primarily by the beta subunits. The polypeptide is ATP synthase subunit beta (Geobacillus thermodenitrificans (strain NG80-2)).